We begin with the raw amino-acid sequence, 244 residues long: MSSSEGNKPPLVPDSTKESEPQFDPTARTRNWFSILLGTMPPSHQILYREDQYARHEKRDCDRCEEWRDYNLKYSPIVIFMQKNIRDLNGKLDADNIRCRRCPTRITEDGKTVRQGGGFSPEHGIQLCANEMRDSKHVEDTLAHEMVHAWDHLRWKVDWGDLRHAACSEIRAASLSGECRWAREFWTRNNYRVTQQHQDCVRRRAVKSVLARPWCKDDVQAVRVVNEVWDSCYSDTRPFDEIYK.

The tract at residues 1–25 is disordered; it reads MSSSEGNKPPLVPDSTKESEPQFDP. H144 lines the a divalent metal cation pocket. The active site involves E145. Position 148 (H148) interacts with a divalent metal cation.

It belongs to the peptidase M76 family.

It localises to the mitochondrion inner membrane. Its function is as follows. Has a dual role in the assembly of mitochondrial ATPase. Acts as a protease that removes N-terminal residues of mitochondrial ATPase CF(0) subunit 6 at the intermembrane space side. Also involved in the correct assembly of the membrane-embedded ATPase CF(0) particle, probably mediating association of subunit 6 with the subunit 9 ring. The protein is Mitochondrial inner membrane protease atp23 (atp23) of Botryotinia fuckeliana (strain B05.10) (Noble rot fungus).